The chain runs to 147 residues: Acidic phospholipase A2 S9-53F (147 aa).

The N-terminal stretch at 1–19 is a signal peptide; sequence MYPAHLLVLLAVCVSLLGA. A propeptide spanning residues 20 to 27 is cleaved from the precursor; sequence SDIPPQPL. Cystine bridges form between cysteine 38–cysteine 99, cysteine 54–cysteine 146, cysteine 56–cysteine 72, cysteine 71–cysteine 127, cysteine 78–cysteine 120, cysteine 88–cysteine 113, and cysteine 106–cysteine 118. Positions 55, 57, and 59 each coordinate Ca(2+). The active site involves histidine 75. Aspartate 76 serves as a coordination point for Ca(2+). Residue aspartate 121 is part of the active site.

This sequence belongs to the phospholipase A2 family. Group I subfamily. D49 sub-subfamily. Requires Ca(2+) as cofactor. Expressed by the venom gland.

The protein resides in the secreted. The enzyme catalyses a 1,2-diacyl-sn-glycero-3-phosphocholine + H2O = a 1-acyl-sn-glycero-3-phosphocholine + a fatty acid + H(+). Snake venom phospholipase A2 (PLA2) that inhibits collagen-induced platelet aggregation. PLA2 catalyzes the calcium-dependent hydrolysis of the 2-acyl groups in 3-sn-phosphoglycerides. The protein is Acidic phospholipase A2 S9-53F of Austrelaps superbus (Lowland copperhead snake).